The chain runs to 199 residues: Pneumococcal vaccine antigen A homolog (199 aa).

Its subcellular location is the cell surface. This is Pneumococcal vaccine antigen A homolog (pvaA) from Streptococcus pyogenes serotype M1.